The following is a 339-amino-acid chain: Geranylgeranyl transferase type-2 subunit beta (339 aa).

Threonine 11 is modified (phosphothreonine). PFTB repeat units lie at residues 28–69 (LEKH…DLMG), 76–117 (REEI…TLYD), 124–165 (VDKV…ALLG), 172–213 (VEKA…AITS), 220–261 (SDLL…KIIG), and 268–310 (REKL…SLLG). Geranylgeranyl diphosphate is bound by residues 198-200 (HAG) and 240-243 (RPEK). Zn(2+) contacts are provided by aspartate 246 and cysteine 248. Geranylgeranyl diphosphate is bound by residues tyrosine 249 and 249 to 252 (YSWW). Histidine 298 provides a ligand contact to Zn(2+).

It belongs to the protein prenyltransferase subunit beta family. As to quaternary structure, heterotrimer composed of RABGGTA, RABGGTB and CHM; within this trimer, RABGGTA and RABGGTB form the catalytic component B, while CHM (component A) mediates peptide substrate binding. The Rab GGTase dimer (RGGT) interacts with CHM (component A) prior to Rab protein binding; the association is stabilized by geranylgeranyl pyrophosphate (GGpp). The CHM:RGGT:Rab complex is destabilized by GGpp. Interaction of RABGGTB with prenylated PTP4A2 precludes its association with RABGGTA and inhibits enzyme activity. Interacts with CHODL. Interacts with non-phosphorylated form of RAB8A; phosphorylation of RAB8A at 'Thr-72' disrupts this interaction. Zn(2+) is required as a cofactor. Ubiquitous. Detected in all the major organs in adult animals.

The enzyme catalyses geranylgeranyl diphosphate + L-cysteinyl-[protein] = S-geranylgeranyl-L-cysteinyl-[protein] + diphosphate. With respect to regulation, the enzymatic reaction requires the aid of a Rab escort protein (also called component A), such as CHM. In terms of biological role, catalyzes the transfer of a geranylgeranyl moiety from geranylgeranyl diphosphate to both cysteines of Rab proteins with the C-terminal sequence -XXCC, -XCXC and -CCXX, such as RAB1A, RAB3A, RAB5A and RAB7A. The polypeptide is Geranylgeranyl transferase type-2 subunit beta (Rabggtb) (Mus musculus (Mouse)).